Here is a 2053-residue protein sequence, read N- to C-terminus: Cell adhesion molecule DSCAML1 (2053 aa).

The N-terminal stretch at 1-18 is a signal peptide; that stretch reads MWLVTFLLLLDSLHKARP. Ig-like C2-type domains follow at residues 19–119, 115–217, 226–306, 314–402, 408–501, 506–586, 596–685, 690–784, and 788–885; these read EDVG…NIRV, PNIR…ARLS, PTIL…AEAT, PLHV…AIIA, PRIV…ARIN, PSIR…LSIS, PPLI…RQLI, PRFV…MFLT, and PAMI…LTVQ. Residues 19-1591 are Extracellular-facing; that stretch reads EDVGTSLYFV…AQGEGDDVKK (1573 aa). Asn29 and Asn79 each carry an N-linked (GlcNAc...) asparagine glycan. Disulfide bonds link Cys47–Cys103, Cys146–Cys198, Cys247–Cys294, Cys336–Cys386, and Cys429–Cys485. Asn368, Asn471, Asn513, Asn556, Asn666, Asn710, Asn749, Asn796, and Asn809 each carry an N-linked (GlcNAc...) asparagine glycan. Disulfide bonds link Cys526–Cys575 and Cys617–Cys669. Cys711 and Cys767 are oxidised to a cystine. Residues Cys810 and Cys867 are joined by a disulfide bond. Fibronectin type-III domains are found at residues 887 to 984, 989 to 1088, 1093 to 1189, and 1193 to 1288; these read PPDP…TEEA, PPMD…TLED, PPEN…TKED, and PPAG…AGKA. 6 N-linked (GlcNAc...) asparagine glycosylation sites follow: Asn926, Asn1082, Asn1144, Asn1162, Asn1275, and Asn1345. One can recognise an Ig-like C2-type 10 domain in the interval 1278–1377; it reads EKVTIEPAGK…TGGFDTIIVN (100 aa). The cysteines at positions 1311 and 1363 are disulfide-linked. Fibronectin type-III domains follow at residues 1383–1477 and 1478–1578; these read PPDQ…THGR and EPSF…TIPP. Asn1492, Asn1531, and Asn1561 each carry an N-linked (GlcNAc...) asparagine glycan. The helical transmembrane segment at 1592 to 1612 threads the bilayer; sequence LFTIGCPVILATLGVALLFIV. Residues 1613-2053 lie on the Cytoplasmic side of the membrane; that stretch reads RKKRKEKRLK…GAYSKSYTLV (441 aa). Disordered regions lie at residues 1715 to 1741, 1773 to 1803, 1840 to 1862, and 1974 to 2053; these read PLID…HSTR, HGVT…STES, SSDQ…STPS, and LAMP…YTLV. Basic residues predominate over residues 1732–1741; that stretch reads KNVKSAHSTR. Residues 1773–1789 show a composition bias toward polar residues; sequence HGVTVTESDSYSASLSQ. Residues 1977–2009 are compositionally biased toward pro residues; the sequence is PAPPAGTAPPAPGPTPAEPPTAPSAAPPAPSTE. Polar residues predominate over residues 2029 to 2041; sequence EMSTSGVGRSQKQ.

Homodimer; mediates homophilic interactions to promote cell adhesion. Detected in heart, liver, pancreas, skeletal muscle, kidney and in brain, in particular in the amygdala, caudate nucleus, corpus callosum, hippocampus, substantia nigra, thalamus and subthalamus.

The protein localises to the cell membrane. The protein resides in the synapse. Functionally, cell adhesion molecule that plays a role in neuronal self-avoidance. Promotes repulsion between specific neuronal processes of either the same cell or the same subtype of cells. Promotes both isoneuronal self-avoidance for creating an orderly neurite arborization in retinal rod bipolar cells and heteroneuronal self-avoidance to maintain mosaic spacing between AII amacrine cells. Adhesion molecule that promotes lamina-specific synaptic connections in the retina: expressed in specific subsets of interneurons and retinal ganglion cells (RGCs) and promotes synaptic connectivity via homophilic interactions. This is Cell adhesion molecule DSCAML1 (DSCAML1) from Homo sapiens (Human).